The following is a 1415-amino-acid chain: Bridge-like lipid transfer protein family member 3B (1415 aa).

The region spanning 3–94 (GLIKKQILKH…DKVIMEMSTC (92 aa)) is the Chorein N-terminal domain. Disordered regions lie at residues 267-300 (STEQRKSMASETTQSPTPPVSSQQVKNPQTSTTP) and 882-904 (KSPLPCEGSPVTDHKLPSPSEGV). The span at 275-300 (ASETTQSPTPPVSSQQVKNPQTSTTP) shows a compositional bias: polar residues. A coiled-coil region spans residues 1367-1404 (KAAGISKEQLVEENECLKQELAKTKMALAESHMERDRL).

Its subcellular location is the cytoplasm. The protein localises to the cytosol. The protein resides in the early endosome. In terms of biological role, tube-forming lipid transport protein which mediates the transfer of lipids between membranes at organelle contact sites. Required for retrograde traffic of vesicle clusters in the early endocytic pathway to the Golgi complex. This chain is Bridge-like lipid transfer protein family member 3B (bltp3b), found in Xenopus laevis (African clawed frog).